We begin with the raw amino-acid sequence, 385 residues long: Ethanolamine kinase 2 (385 aa).

This sequence belongs to the choline/ethanolamine kinase family.

It catalyses the reaction ethanolamine + ATP = phosphoethanolamine + ADP + H(+). It participates in phospholipid metabolism; phosphatidylethanolamine biosynthesis; phosphatidylethanolamine from ethanolamine: step 1/3. Highly specific for ethanolamine phosphorylation. Does not have choline kinase activity. The protein is Ethanolamine kinase 2 (Etnk2) of Rattus norvegicus (Rat).